The following is a 43-amino-acid chain: Cytochrome b559 subunit beta (43 aa).

The helical transmembrane segment at 18 to 34 (WLAIHGLAIPTVFFLGG) threads the bilayer. A heme-binding site is contributed by histidine 22.

The protein belongs to the PsbE/PsbF family. As to quaternary structure, heterodimer of an alpha subunit and a beta subunit. PSII is composed of 1 copy each of membrane proteins PsbA, PsbB, PsbC, PsbD, PsbE, PsbF, PsbH, PsbI, PsbJ, PsbK, PsbL, PsbM, PsbT, PsbX, PsbY, PsbZ, Psb30/Ycf12, at least 3 peripheral proteins of the oxygen-evolving complex and a large number of cofactors. It forms dimeric complexes. Heme b serves as cofactor.

Its subcellular location is the plastid. The protein localises to the chloroplast thylakoid membrane. In terms of biological role, this b-type cytochrome is tightly associated with the reaction center of photosystem II (PSII). PSII is a light-driven water:plastoquinone oxidoreductase that uses light energy to abstract electrons from H(2)O, generating O(2) and a proton gradient subsequently used for ATP formation. It consists of a core antenna complex that captures photons, and an electron transfer chain that converts photonic excitation into a charge separation. In Trieres chinensis (Marine centric diatom), this protein is Cytochrome b559 subunit beta.